Reading from the N-terminus, the 210-residue chain is Pyridoxine/pyridoxamine 5'-phosphate oxidase (210 aa).

Residues 7-10 (REDY) and Lys65 each bind substrate. FMN-binding positions include 60 to 65 (RMVLLK), 75 to 76 (FT), Arg81, Lys82, and Gln104. The substrate site is built by Tyr122, Arg126, and Ser130. FMN is bound by residues 139 to 140 (QS) and Trp183. 189–191 (RLH) lines the substrate pocket. Residue Arg193 coordinates FMN.

Belongs to the pyridoxamine 5'-phosphate oxidase family. In terms of assembly, homodimer. Requires FMN as cofactor.

The catalysed reaction is pyridoxamine 5'-phosphate + O2 + H2O = pyridoxal 5'-phosphate + H2O2 + NH4(+). It catalyses the reaction pyridoxine 5'-phosphate + O2 = pyridoxal 5'-phosphate + H2O2. Its pathway is cofactor metabolism; pyridoxal 5'-phosphate salvage; pyridoxal 5'-phosphate from pyridoxamine 5'-phosphate: step 1/1. The protein operates within cofactor metabolism; pyridoxal 5'-phosphate salvage; pyridoxal 5'-phosphate from pyridoxine 5'-phosphate: step 1/1. Its function is as follows. Catalyzes the oxidation of either pyridoxine 5'-phosphate (PNP) or pyridoxamine 5'-phosphate (PMP) into pyridoxal 5'-phosphate (PLP). The protein is Pyridoxine/pyridoxamine 5'-phosphate oxidase of Neisseria meningitidis serogroup A / serotype 4A (strain DSM 15465 / Z2491).